The chain runs to 187 residues: Troponin I, slow skeletal muscle (187 aa).

Proline 2 is modified (N-acetylproline). The involved in binding TNC stretch occupies residues 2–48 (PEVERKSKITASRKLMLKSLMLAKAKECWEQEHEEREAEKVRYLSER). Serine 58 bears the Phosphoserine mark. The interval 97-118 (LKLKVLDLRGKFKRPPLRRVRV) is involved in binding TNC and actin.

Belongs to the troponin I family. In terms of assembly, binds to actin and tropomyosin.

Its function is as follows. Troponin I is the inhibitory subunit of troponin, the thin filament regulatory complex which confers calcium-sensitivity to striated muscle actomyosin ATPase activity. The polypeptide is Troponin I, slow skeletal muscle (Tnni1) (Mus musculus (Mouse)).